We begin with the raw amino-acid sequence, 1534 residues long: ABC transporter G family member 6 (1534 aa).

Residues 1 to 11 show a composition bias toward basic and acidic residues; it reads MAKQDPKDKNS. The interval 1 to 85 is disordered; it reads MAKQDPKDKN…ESNYDSDDEK (85 aa). Positions 21–65 are enriched in low complexity; sequence NNNNNENLDNDQELLNNNNNNNNNNNNNNNNNNNNNNNNNNNNNL. Residues 138–385 form the ABC transporter 1 domain; it reads VYCRNATYTV…FKKLGFACPS (248 aa). 177–184 is an ATP binding site; sequence GTPGCGKS. Residues 481-757 form the ABC transmembrane type-2 1 domain; that stretch reads RRNYYNFLTR…VVCFFALKYF (277 aa). Helical transmembrane passes span 486 to 506, 521 to 541, 566 to 586, 592 to 612, 625 to 645, 652 to 672, and 734 to 754; these read NFLT…TLYW, LLFF…NSFF, IICD…IVYW, PVFI…NLSL, IEIA…FSGF, IGGW…FQGL, and VVFG…FFAL. Residues 781 to 907 form a disordered region; the sequence is KQDEESAAIS…KSKNGKDIGS (127 aa). Acidic residues predominate over residues 797–808; the sequence is IDDDNDDDADYE. Residues 830 to 841 are compositionally biased toward polar residues; it reads SPSSLTTGSPYY. Positions 842–856 are enriched in low complexity; sequence NINNNNNNLSGSGNN. Positions 864–873 are enriched in polar residues; that stretch reads TPSNLSPSVN. Over residues 874–896 the composition is skewed to low complexity; it reads SPITINSPMPTSPSNNNNNNNSN. A compositionally biased stretch (basic and acidic residues) spans 897-906; sequence EKSKNGKDIG. One can recognise an ABC transporter 2 domain in the interval 924–1166; that stretch reads VKVDDPDNPK…VILDYCDKLG (243 aa). An ATP-binding site is contributed by 960-967; the sequence is GPSGAGKS. In terms of domain architecture, ABC transmembrane type-2 2 spans 1256–1529; that stretch reads LRRPAIFVSN…GLSFWGFKKI (274 aa). Helical transmembrane passes span 1261 to 1281, 1296 to 1316, 1345 to 1365, 1377 to 1397, 1404 to 1424, and 1506 to 1526; these read IFVS…TLFV, LLFF…PTTV, YPFT…IAGL, CLFI…CLAV, MAST…GFVI, and IDIA…FWGF.

This sequence belongs to the ABC transporter superfamily. ABCG family. PDR (TC 3.A.1.205) subfamily.

It is found in the membrane. The protein is ABC transporter G family member 6 (abcG6) of Dictyostelium discoideum (Social amoeba).